The following is a 155-amino-acid chain: Transcription antitermination protein NusB (155 aa).

Belongs to the NusB family.

Involved in transcription antitermination. Required for transcription of ribosomal RNA (rRNA) genes. Binds specifically to the boxA antiterminator sequence of the ribosomal RNA (rrn) operons. The chain is Transcription antitermination protein NusB from Ralstonia pickettii (strain 12J).